The sequence spans 172 residues: Austinoid biosynthesis clusters protein J (172 aa).

It belongs to the trt14 isomerase family. As to quaternary structure, homodimer.

Its pathway is secondary metabolite biosynthesis; terpenoid biosynthesis. Part of the gene cluster B that mediates the biosynthesis of the fungal meroterpenoid acetoxydehydroaustin. The first step of the pathway is the synthesis of 3,5-dimethylorsellinic acid by the polyketide synthase ausA. 3,5-dimethylorsellinic acid is then prenylated by the polyprenyl transferase ausN. Further epoxidation by the FAD-dependent monooxygenase ausM and cyclization by the probable terpene cyclase ausL lead to the formation of protoaustinoid A. Protoaustinoid A is then oxidized to spiro-lactone preaustinoid A3 by the combined action of the FAD-binding monooxygenases ausB and ausC, and the dioxygenase ausE. Acid-catalyzed keto-rearrangement and ring contraction of the tetraketide portion of preaustinoid A3 by ausJ lead to the formation of preaustinoid A4. The aldo-keto reductase ausK, with the help of ausH, is involved in the next step by transforming preaustinoid A4 into isoaustinone which is in turn hydroxylated by the P450 monooxygenase ausI to form austinolide. The cytochrome P450 monooxygenase ausG then modifies austinolide to austinol. Austinol is further acetylated to austin by the O-acetyltransferase ausP, which spontaneously changes to dehydroaustin. The cytochrome P450 monooxygenase then converts dehydroaustin is into 7-dehydrodehydroaustin. The hydroxylation catalyzed by ausR permits the second O-acetyltransferase ausQ to add an additional acetyl group to the molecule, leading to the formation of acetoxydehydroaustin. Due to genetic rearrangements of the clusters and the subsequent loss of some enzymes, the end product of the Penicillium brasilianum austinoid biosynthesis clusters is acetoxydehydroaustin. The sequence is that of Austinoid biosynthesis clusters protein J from Penicillium brasilianum.